Reading from the N-terminus, the 301-residue chain is UDP-3-O-acyl-N-acetylglucosamine deacetylase (301 aa).

Zn(2+)-binding residues include H81, H237, and D241. H264 functions as the Proton donor in the catalytic mechanism.

Belongs to the LpxC family. Zn(2+) is required as a cofactor.

The enzyme catalyses a UDP-3-O-[(3R)-3-hydroxyacyl]-N-acetyl-alpha-D-glucosamine + H2O = a UDP-3-O-[(3R)-3-hydroxyacyl]-alpha-D-glucosamine + acetate. The protein operates within glycolipid biosynthesis; lipid IV(A) biosynthesis; lipid IV(A) from (3R)-3-hydroxytetradecanoyl-[acyl-carrier-protein] and UDP-N-acetyl-alpha-D-glucosamine: step 2/6. In terms of biological role, catalyzes the hydrolysis of UDP-3-O-myristoyl-N-acetylglucosamine to form UDP-3-O-myristoylglucosamine and acetate, the committed step in lipid A biosynthesis. This Leptospira borgpetersenii serovar Hardjo-bovis (strain JB197) protein is UDP-3-O-acyl-N-acetylglucosamine deacetylase.